The following is a 434-amino-acid chain: Glutamate-1-semialdehyde 2,1-aminomutase (434 aa).

Lys-274 is modified (N6-(pyridoxal phosphate)lysine).

It belongs to the class-III pyridoxal-phosphate-dependent aminotransferase family. HemL subfamily. In terms of assembly, homodimer. Pyridoxal 5'-phosphate serves as cofactor.

It is found in the cytoplasm. It carries out the reaction (S)-4-amino-5-oxopentanoate = 5-aminolevulinate. The protein operates within porphyrin-containing compound metabolism; protoporphyrin-IX biosynthesis; 5-aminolevulinate from L-glutamyl-tRNA(Glu): step 2/2. The chain is Glutamate-1-semialdehyde 2,1-aminomutase from Acidovorax ebreus (strain TPSY) (Diaphorobacter sp. (strain TPSY)).